The sequence spans 35 residues: Defensin-B (35 aa).

3 disulfides stabilise this stretch: C4-C25, C10-C33, and C14-C35.

The protein localises to the secreted. Functionally, has antibacterial activity against M.luteus and E.coli. This Mytilus edulis (Blue mussel) protein is Defensin-B.